Consider the following 463-residue polypeptide: Zinc finger protein PLAGL1 (463 aa).

7 C2H2-type zinc fingers span residues 4 to 26 (YPCQ…NYSH), 32 to 56 (YKCL…MATH), 62 to 84 (HQCA…LQTH), 91 to 113 (FGCE…LALH), 120 to 142 (LTCG…LKAH), 156 to 178 (HQCD…LVVH), and 184 to 207 (FLCQ…KKTH). The interval 285–310 (LHPVAPPTSPPQPLQNHKYNTSSTSY) is disordered. Over residues 287-297 (PVAPPTSPPQP) the composition is skewed to pro residues. A compositionally biased stretch (polar residues) spans 298–310 (LQNHKYNTSSTSY).

This sequence belongs to the krueppel C2H2-type zinc-finger protein family. Interacts with THRSP.

It localises to the nucleus. Its function is as follows. Acts as a transcriptional activator. Involved in the transcriptional regulation of type 1 receptor for pituitary adenylate cyclase-activating polypeptide. This chain is Zinc finger protein PLAGL1 (PLAGL1), found in Sus scrofa (Pig).